We begin with the raw amino-acid sequence, 371 residues long: Glutamate 5-kinase (371 aa).

An ATP-binding site is contributed by K11. Substrate-binding residues include S52, D139, and N151. Residues T171–D172 and T213–K219 contribute to the ATP site. A PUA domain is found at E278–E356.

This sequence belongs to the glutamate 5-kinase family.

It is found in the cytoplasm. The enzyme catalyses L-glutamate + ATP = L-glutamyl 5-phosphate + ADP. Its pathway is amino-acid biosynthesis; L-proline biosynthesis; L-glutamate 5-semialdehyde from L-glutamate: step 1/2. Its function is as follows. Catalyzes the transfer of a phosphate group to glutamate to form L-glutamate 5-phosphate. The polypeptide is Glutamate 5-kinase (Synechococcus sp. (strain JA-3-3Ab) (Cyanobacteria bacterium Yellowstone A-Prime)).